The sequence spans 399 residues: 1-deoxy-D-xylulose 5-phosphate reductoisomerase (399 aa).

Thr-11, Gly-12, Ser-13, Ile-14, and Asn-125 together coordinate NADPH. A 1-deoxy-D-xylulose 5-phosphate-binding site is contributed by Lys-126. Glu-127 is an NADPH binding site. Position 151 (Asp-151) interacts with Mn(2+). Positions 152, 153, 186, and 209 each coordinate 1-deoxy-D-xylulose 5-phosphate. Glu-153 provides a ligand contact to Mn(2+). Position 215 (Gly-215) interacts with NADPH. The 1-deoxy-D-xylulose 5-phosphate site is built by Ser-222, Asn-227, Lys-228, and Glu-231. Glu-231 serves as a coordination point for Mn(2+).

The protein belongs to the DXR family. Mg(2+) is required as a cofactor. Mn(2+) serves as cofactor.

The catalysed reaction is 2-C-methyl-D-erythritol 4-phosphate + NADP(+) = 1-deoxy-D-xylulose 5-phosphate + NADPH + H(+). It participates in isoprenoid biosynthesis; isopentenyl diphosphate biosynthesis via DXP pathway; isopentenyl diphosphate from 1-deoxy-D-xylulose 5-phosphate: step 1/6. Functionally, catalyzes the NADPH-dependent rearrangement and reduction of 1-deoxy-D-xylulose-5-phosphate (DXP) to 2-C-methyl-D-erythritol 4-phosphate (MEP). The polypeptide is 1-deoxy-D-xylulose 5-phosphate reductoisomerase (Acinetobacter baumannii (strain SDF)).